A 71-amino-acid polypeptide reads, in one-letter code: Cell division protein FtsB (71 aa).

Over 1-3 (MKI) the chain is Cytoplasmic. A helical transmembrane segment spans residues 4 to 21 (LKIFLLSLLFWLQYSLWF). At 22–71 (GKNGVLDFIKIYRRVTIEKKNNEYLDMRNNQIILEIENFNNHINKDKKKT) the chain is on the extracellular side.

It belongs to the FtsB family.

Its subcellular location is the cell membrane. Essential cell division protein. May link together the upstream cell division proteins, which are predominantly cytoplasmic, with the downstream cell division proteins, which are predominantly extracellular. This chain is Cell division protein FtsB, found in Buchnera aphidicola subsp. Acyrthosiphon pisum (strain APS) (Acyrthosiphon pisum symbiotic bacterium).